Here is a 286-residue protein sequence, read N- to C-terminus: Pantothenate synthetase (286 aa).

30–37 is a binding site for ATP; the sequence is MGYFHEGH. His-37 (proton donor) is an active-site residue. (R)-pantoate is bound at residue Gln-61. Beta-alanine is bound at residue Gln-61. Residue 147–150 participates in ATP binding; sequence GKKD. (R)-pantoate is bound at residue Gln-153. ATP is bound at residue 184–187; sequence MSSR.

This sequence belongs to the pantothenate synthetase family. As to quaternary structure, homodimer.

It is found in the cytoplasm. It carries out the reaction (R)-pantoate + beta-alanine + ATP = (R)-pantothenate + AMP + diphosphate + H(+). It functions in the pathway cofactor biosynthesis; (R)-pantothenate biosynthesis; (R)-pantothenate from (R)-pantoate and beta-alanine: step 1/1. Its function is as follows. Catalyzes the condensation of pantoate with beta-alanine in an ATP-dependent reaction via a pantoyl-adenylate intermediate. The protein is Pantothenate synthetase of Syntrophus aciditrophicus (strain SB).